Consider the following 390-residue polypeptide: 4-hydroxy-3-methylbut-2-en-1-yl diphosphate synthase (flavodoxin) (390 aa).

Positions 281, 284, 316, and 323 each coordinate [4Fe-4S] cluster.

The protein belongs to the IspG family. The cofactor is [4Fe-4S] cluster.

It carries out the reaction (2E)-4-hydroxy-3-methylbut-2-enyl diphosphate + oxidized [flavodoxin] + H2O + 2 H(+) = 2-C-methyl-D-erythritol 2,4-cyclic diphosphate + reduced [flavodoxin]. The protein operates within isoprenoid biosynthesis; isopentenyl diphosphate biosynthesis via DXP pathway; isopentenyl diphosphate from 1-deoxy-D-xylulose 5-phosphate: step 5/6. Its function is as follows. Converts 2C-methyl-D-erythritol 2,4-cyclodiphosphate (ME-2,4cPP) into 1-hydroxy-2-methyl-2-(E)-butenyl 4-diphosphate. In Salinispora tropica (strain ATCC BAA-916 / DSM 44818 / JCM 13857 / NBRC 105044 / CNB-440), this protein is 4-hydroxy-3-methylbut-2-en-1-yl diphosphate synthase (flavodoxin).